The primary structure comprises 305 residues: tRNA N6-adenosine threonylcarbamoyltransferase (305 aa).

Positions 108 and 112 each coordinate Fe cation. Residues 130-134 (VVSGG), Asp-163, Gly-176, Asp-180, and Asn-264 each bind substrate. Asp-288 is a Fe cation binding site.

The protein belongs to the KAE1 / TsaD family. It depends on Fe(2+) as a cofactor.

It localises to the cytoplasm. It catalyses the reaction L-threonylcarbamoyladenylate + adenosine(37) in tRNA = N(6)-L-threonylcarbamoyladenosine(37) in tRNA + AMP + H(+). Its function is as follows. Required for the formation of a threonylcarbamoyl group on adenosine at position 37 (t(6)A37) in tRNAs that read codons beginning with adenine. Is involved in the transfer of the threonylcarbamoyl moiety of threonylcarbamoyl-AMP (TC-AMP) to the N6 group of A37, together with TsaE and TsaB. TsaD likely plays a direct catalytic role in this reaction. The protein is tRNA N6-adenosine threonylcarbamoyltransferase of Mycoplasma mobile (strain ATCC 43663 / 163K / NCTC 11711) (Mesomycoplasma mobile).